Reading from the N-terminus, the 356-residue chain is Probable cysteine protease RDL6 (356 aa).

The signal sequence occupies residues 1 to 26 (MGFVRPVCMTILFLLIVFVLSAPSSA). A propeptide spans 27-132 (MDLPATSGGH…RRYVPLAGDQ (106 aa)) (activation peptide). N37 and N86 each carry an N-linked (GlcNAc...) asparagine glycan. 3 disulfides stabilise this stretch: C154–C195, C188–C229, and C288–C339. C157 is an active-site residue. Catalysis depends on residues H294 and N314.

Belongs to the peptidase C1 family.

Its function is as follows. Probable thiol protease. The sequence is that of Probable cysteine protease RDL6 from Arabidopsis thaliana (Mouse-ear cress).